Here is a 152-residue protein sequence, read N- to C-terminus: Nucleoside diphosphate kinase A (152 aa).

ATP-binding residues include Lys12, Phe60, Arg88, and Thr94. Residue Lys100 forms a Glycyl lysine isopeptide (Lys-Gly) (interchain with G-Cter in ubiquitin) linkage. Residues Arg105 and Asn115 each contribute to the ATP site. The Pros-phosphohistidine intermediate role is filled by His118. A phosphoserine mark is found at Ser120, Ser122, and Ser125.

It belongs to the NDK family. In terms of assembly, hexamer of two different chains: An and B (A6, A5B, A4B2, A3B3, A2B4, AB5, B6). Interacts with PRUNE1. Component of the SET complex, composed of at least ANP32A, APEX1, HMGB2, NME1, SET and TREX1. Within this complex, interacts directly with SET. Also interacts with TREX1, but only following translocation to the nucleus. Mg(2+) serves as cofactor.

The protein localises to the cytoplasm. The protein resides in the nucleus. The catalysed reaction is a 2'-deoxyribonucleoside 5'-diphosphate + ATP = a 2'-deoxyribonucleoside 5'-triphosphate + ADP. It carries out the reaction a ribonucleoside 5'-diphosphate + ATP = a ribonucleoside 5'-triphosphate + ADP. With respect to regulation, autophosphorylation at His-118 increases serine/threonine protein kinase activity of the enzyme. Interaction with the SET complex inhibits exonuclease activity. Major role in the synthesis of nucleoside triphosphates other than ATP. The ATP gamma phosphate is transferred to the NDP beta phosphate via a ping-pong mechanism, using a phosphorylated active-site intermediate. Possesses nucleoside-diphosphate kinase, serine/threonine-specific protein kinase, geranyl and farnesyl pyrophosphate kinase, histidine protein kinase and 3'-5' exonuclease activities. Involved in cell proliferation, differentiation and development, signal transduction, G protein-coupled receptor endocytosis, and gene expression. Required for neural development including neural patterning and cell fate determination. During GZMA-mediated cell death, works in concert with TREX1. NME1 nicks one strand of DNA and TREX1 removes bases from the free 3' end to enhance DNA damage and prevent DNA end reannealing and rapid repair. In Canis lupus familiaris (Dog), this protein is Nucleoside diphosphate kinase A (NME1).